The primary structure comprises 727 residues: Elongation factor 2 (727 aa).

Positions 19–260 (DQIRNMGICA…MAITHLPNPL (242 aa)) constitute a tr-type G domain. GTP-binding positions include 28–35 (AHIDHGKT), 94–98 (DTPGH), and 148–151 (NKVD). Position 603 is a diphthamide (His603).

The protein belongs to the TRAFAC class translation factor GTPase superfamily. Classic translation factor GTPase family. EF-G/EF-2 subfamily.

The protein localises to the cytoplasm. In terms of biological role, catalyzes the GTP-dependent ribosomal translocation step during translation elongation. During this step, the ribosome changes from the pre-translocational (PRE) to the post-translocational (POST) state as the newly formed A-site-bound peptidyl-tRNA and P-site-bound deacylated tRNA move to the P and E sites, respectively. Catalyzes the coordinated movement of the two tRNA molecules, the mRNA and conformational changes in the ribosome. The sequence is that of Elongation factor 2 from Methanococcus maripaludis (strain C6 / ATCC BAA-1332).